The chain runs to 395 residues: DNA polymerase IV (395 aa).

Residues 7 to 187 form the UmuC domain; it reads FFHVDIDAFF…LPLKDVWGVG (181 aa). Mg(2+) is bound by residues D11 and D105. E106 is a catalytic residue.

It belongs to the DNA polymerase type-Y family. In terms of assembly, monomer. It depends on Mg(2+) as a cofactor.

It is found in the cytoplasm. The catalysed reaction is DNA(n) + a 2'-deoxyribonucleoside 5'-triphosphate = DNA(n+1) + diphosphate. Poorly processive, error-prone DNA polymerase involved in untargeted mutagenesis. Copies undamaged DNA at stalled replication forks, which arise in vivo from mismatched or misaligned primer ends. These misaligned primers can be extended by PolIV. Exhibits no 3'-5' exonuclease (proofreading) activity. May be involved in translesional synthesis, in conjunction with the beta clamp from PolIII. This chain is DNA polymerase IV, found in Treponema denticola (strain ATCC 35405 / DSM 14222 / CIP 103919 / JCM 8153 / KCTC 15104).